The chain runs to 131 residues: Protein ApaG (131 aa).

In terms of domain architecture, ApaG spans 3-127; sequence RAVTRQIEVT…FSLDSPDGGK (125 aa).

The sequence is that of Protein ApaG from Bradyrhizobium sp. (strain BTAi1 / ATCC BAA-1182).